A 333-amino-acid polypeptide reads, in one-letter code: Fructose-1,6-bisphosphatase class 1 (333 aa).

Mg(2+) is bound by residues Glu-90, Asp-113, Leu-115, and Asp-116. Residues 116-119, Asn-209, Tyr-242, and Lys-272 contribute to the substrate site; that span reads DGSS. Glu-278 serves as a coordination point for Mg(2+).

The protein belongs to the FBPase class 1 family. In terms of assembly, homotetramer. Requires Mg(2+) as cofactor.

It is found in the cytoplasm. The catalysed reaction is beta-D-fructose 1,6-bisphosphate + H2O = beta-D-fructose 6-phosphate + phosphate. It functions in the pathway carbohydrate biosynthesis; gluconeogenesis. The protein is Fructose-1,6-bisphosphatase class 1 of Pasteurella multocida (strain Pm70).